We begin with the raw amino-acid sequence, 430 residues long: N-acylneuraminate cytidylyltransferase A (430 aa).

Residues 1–29 (MDAVNENGKRAMKDDSHGNSTSPKRRKSR) are disordered. Positions 7–17 (NGKRAMKDDSH) are enriched in basic and acidic residues. The short motif at 9-27 (KRAMKDDSHGNSTSPKRRK) is the Bipartite nuclear localization signal element. Substrate-binding residues include R38, N48, R97, S106, S108, and Q129. R187 is a catalytic residue.

It belongs to the CMP-NeuNAc synthase family. As to quaternary structure, homotetramer.

Its subcellular location is the nucleus. The enzyme catalyses an N-acylneuraminate + CTP = a CMP-N-acyl-beta-neuraminate + diphosphate. Its pathway is amino-sugar metabolism; N-acetylneuraminate metabolism. In terms of biological role, catalyzes the activation of N-acetylneuraminic acid (NeuNAc) to cytidine 5'-monophosphate N-acetylneuraminic acid (CMP-NeuNAc), a substrate required for the addition of sialic acid. Also has activity towards N-glycolylneuraminic acid (Neu5Gc). Has weak activity towards 2-keto-3-deoxy-D-glycero-D-galacto-nononic acid (KDN). This chain is N-acylneuraminate cytidylyltransferase A, found in Danio rerio (Zebrafish).